The following is a 493-amino-acid chain: Probable fatty acyl-CoA reductase 4 (493 aa).

It belongs to the fatty acyl-CoA reductase family. In terms of tissue distribution, expressed in the endodermal cell layer surrounding the central vasculature in roots. Expressed in the hilum region of seeds. Expressed in stamen filaments and receptacle of siliques.

It carries out the reaction a long-chain fatty acyl-CoA + 2 NADPH + 2 H(+) = a long-chain primary fatty alcohol + 2 NADP(+) + CoA. Catalyzes the reduction of fatty acyl-CoA to fatty alcohols. Catalyzes specifically the formation of C18:0 and C20:0 fatty alcohols. Provides the fatty alcohols required for synthesis of suberin in roots, seed coat and wound-induced leaf tissue. Provides the fatty alcohols required for synthesis of alkyl hydroxycinnamates in root waxes. This chain is Probable fatty acyl-CoA reductase 4, found in Arabidopsis thaliana (Mouse-ear cress).